The sequence spans 235 residues: MRPSGRNNDQLRNLKVTHNFTKHAEGSVLIEFGDTKVICTASVVAGVPKFKKDSGEGWLTAEYGMLPRSTHMRMDREAARGKQSGRTQEIQRLIGRALRASVDLTAIGENTIKIDCDVIQADGGTRTASITGASLAIADAIEYMKQNGMLDEQANPLLSQVAAISVGIYNNEPVLDLDYDEDSNAETDMNVVMNSNGGIIEIQGTAEGKDFSEEEFAKMLGLAKKGIKEIFATVF.

Phosphate contacts are provided by residues arginine 86 and 124–126; that span reads GTR.

The protein belongs to the RNase PH family. As to quaternary structure, homohexameric ring arranged as a trimer of dimers.

It carries out the reaction tRNA(n+1) + phosphate = tRNA(n) + a ribonucleoside 5'-diphosphate. Functionally, phosphorolytic 3'-5' exoribonuclease that plays an important role in tRNA 3'-end maturation. Removes nucleotide residues following the 3'-CCA terminus of tRNAs; can also add nucleotides to the ends of RNA molecules by using nucleoside diphosphates as substrates, but this may not be physiologically important. Probably plays a role in initiation of 16S rRNA degradation (leading to ribosome degradation) during starvation. The polypeptide is Ribonuclease PH (Francisella tularensis subsp. mediasiatica (strain FSC147)).